The chain runs to 200 residues: MKRYGIIGGTFDPIHYGHLYIAYEAKKQLNLDNVIFMPAGNPPHKEGKKVTDSLLRYKMVKKAIEDFSGFSISDYEIDKKGFSYTYETLEHFKNNDVELFFITGADCLMDIETWERADTILSLCNLVVFSRGGFSNKNLIKQKEYIEKKYSVNIIVLPLKRLEISSTDIRKRINNKERVDFFVPRSIIKLIEENSLYKEE.

It belongs to the NadD family.

The catalysed reaction is nicotinate beta-D-ribonucleotide + ATP + H(+) = deamido-NAD(+) + diphosphate. The protein operates within cofactor biosynthesis; NAD(+) biosynthesis; deamido-NAD(+) from nicotinate D-ribonucleotide: step 1/1. Catalyzes the reversible adenylation of nicotinate mononucleotide (NaMN) to nicotinic acid adenine dinucleotide (NaAD). The sequence is that of Probable nicotinate-nucleotide adenylyltransferase from Clostridium botulinum (strain Eklund 17B / Type B).